Reading from the N-terminus, the 375-residue chain is Phospho-N-acetylmuramoyl-pentapeptide-transferase (375 aa).

10 helical membrane-spanning segments follow: residues 2-22 (IGLLIGGVLGLVLSAAGTPLF), 55-75 (AVIIGSLVLAYLITHGLLAVL), 82-102 (PTASGLILLLLTVGMAFVGFV), 120-140 (GKIILQALIGTAFAVLALNFP), 158-178 (IPWLDLAFAGPAIGVILFVIW), 198-218 (GLATGATAMITGAYVLISLFQ), 237-257 (PMDLALLAAILTGSLLGFLWW), 264-284 (IFMGDTGSLGLGGALAGFAIF), 289-309 (ILVAVLAGLMVAITLSVIIQV), and 345-365 (WLLSLMCVTVGLAIFYGDWLI).

It belongs to the glycosyltransferase 4 family. MraY subfamily. Mg(2+) serves as cofactor.

The protein localises to the cell membrane. The enzyme catalyses UDP-N-acetyl-alpha-D-muramoyl-L-alanyl-gamma-D-glutamyl-meso-2,6-diaminopimeloyl-D-alanyl-D-alanine + di-trans,octa-cis-undecaprenyl phosphate = di-trans,octa-cis-undecaprenyl diphospho-N-acetyl-alpha-D-muramoyl-L-alanyl-D-glutamyl-meso-2,6-diaminopimeloyl-D-alanyl-D-alanine + UMP. It functions in the pathway cell wall biogenesis; peptidoglycan biosynthesis. Its function is as follows. Catalyzes the initial step of the lipid cycle reactions in the biosynthesis of the cell wall peptidoglycan: transfers peptidoglycan precursor phospho-MurNAc-pentapeptide from UDP-MurNAc-pentapeptide onto the lipid carrier undecaprenyl phosphate, yielding undecaprenyl-pyrophosphoryl-MurNAc-pentapeptide, known as lipid I. The protein is Phospho-N-acetylmuramoyl-pentapeptide-transferase of Micrococcus luteus (strain ATCC 4698 / DSM 20030 / JCM 1464 / CCM 169 / CCUG 5858 / IAM 1056 / NBRC 3333 / NCIMB 9278 / NCTC 2665 / VKM Ac-2230) (Micrococcus lysodeikticus).